The primary structure comprises 620 residues: Chaperone protein HscA homolog (620 aa).

Belongs to the heat shock protein 70 family.

Chaperone involved in the maturation of iron-sulfur cluster-containing proteins. Has a low intrinsic ATPase activity which is markedly stimulated by HscB. The polypeptide is Chaperone protein HscA homolog (Acinetobacter baylyi (strain ATCC 33305 / BD413 / ADP1)).